A 391-amino-acid polypeptide reads, in one-letter code: MAIPTKERGSRLTDADILSDLQMYKPVTDSDTRNVWAFWDKGLSNSPAWNQRNVISWVRRLSPKWTVRVLDLVEGSPNHVSQFIPREMLTDVFWNRTMTGPHVGQHSSDLIRLPLLYLYGGVWLDVGMLLFRSLDALCWNALEDPETPYEVAAFKVSMGPELSFLFNGFIAARRGSVCIKYWHEIFRTLWDGATSCAGMHSHPLLAHLPVYEPPSLNGKRPPFMYAQFADYLAQVFCLERLRHLVDSKTGWDGPKFFEEKVLLFDCVTEAYWAQRLTDWNGRKQYELLDLQRGEDGLDNARVKEAEALVQGVLSMSSTMKLSHGLVTAGREYLADIWDSPKNHDADIRPGTFAAYLREASETFEQTKELVPLRMPVIEKALLRAGVTEVVR.

The protein belongs to the afumC glycosyltransferase family.

It participates in secondary metabolite biosynthesis. With respect to regulation, activity is significantly decreased by addition of divalent cations such as Mg(2+), Mn(2+), Zn(2+), Ca(2+), Co(2+), Cu(2+), and Ni(2+); while Fe(2+) has little effect. Glycosyltransferase; part of the gene cluster that mediates the biosynthesis fumihopaside A, a hopane-type glucoside that enhances the thermotolerance and UV resistance of N.fumigata. The first step of fumihopaside A biosynthesis is performed by the squalene hopane cyclase afumA that catalyzes the cyclization of 3S-oxidosqualene into the hopene 21-beta-H-hopane-3-beta,22-diol. The cytochrome P450 monooxygenase afumB is responsible for both hydroxylation at C-24 and oxidations at C-30 of the afumA product. The glycosyltransferase afumC then catalyzes the glycosylation at C-24, using UDP-D-glucose as a donor, to produce fumihopaside A. AfumC is also able to accept UDP-D-galactose and UDP-D-glucuronic acid as donors to yield minor derivatives. Fumihopaside B, another minor derivative produced, is different from fumihopaside A due to the presence of a double bond between C-22 and C-29. The protein is Glycosyltransferase afumC of Aspergillus fumigatus (strain CBS 144.89 / FGSC A1163 / CEA10) (Neosartorya fumigata).